The primary structure comprises 427 residues: Serine protease inhibitor 88Ea (427 aa).

The first 18 residues, 1 to 18 (MHILSISLMAVLPAIALA), serve as a signal peptide directing secretion. Asn-224 is a glycosylation site (N-linked (GlcNAc...) asparagine).

The protein belongs to the serpin family. Expressed in nurse cells and oocytes. Expressed in wings.

It is found in the secreted. Functionally, serine protease inhibitor with activity toward trypsin. Negatively regulates the Toll signaling pathway and suppresses the expression of the antifungal peptide drosomycin. Its negative regulation of the Toll signaling pathway also results in the inhibition of the melanization immune response via the phenoloxidase (PPO1) cascade. Essential for unfolding and expansion of the wings after emergence from the pupal case. May regulate the Toll pathway by blocking the proteolysis of the Toll ligand spz. This is Serine protease inhibitor 88Ea from Drosophila melanogaster (Fruit fly).